A 492-amino-acid chain; its full sequence is MTETVTDQGKQRSSKLQKNEAAKDEQVEGKGKETLESGTDKSAEQNSSLLVGQPDVIDNDNVQTVDDFKNLMYKMQETRRAIVFALLNEKDLTKDDVEILKRAYEKLTDNQTHSFQREMCTLTTKLSVNIGDETRGLEKDLKYLDALMNIRREEPNLLWPIIMSRVDLFSILANYHPKGKETFLKEYEDTVKFLKTFISSEAITGKKPIFITDWDGTMKDYCSQYATNLQPVYSAVGMTRFAASFTRISAVLTAGPLRGPGILDLTAMPIDGPVMFSGSWGREWWLSGKRVVHQDGITDEGFNALQRLDDEMKDLLHTSDYAPFALVGSGVQRKVDRLTLGVQTVCHHVTSELSNRYQMAVKERMHRVDPNSQILVFDPSTELEVEVVAHNSGIIWNKGNGVERLIKSLGDSLQSPGKILICGDTLSDIPMVRQAVKQNPDGVLAIFVGAKMSLREEVKQVIGDESRCCFVSCPDVIHAAMSQILNEHCIGK.

Positions 1–55 (MTETVTDQGKQRSSKLQKNEAAKDEQVEGKGKETLESGTDKSAEQNSSLLVGQPD) are disordered. A compositionally biased stretch (basic and acidic residues) spans 17–43 (QKNEAAKDEQVEGKGKETLESGTDKSA). Residues aspartate 213 and aspartate 215 each contribute to the Mg(2+) site. Aspartate 215 acts as the Proton donor/acceptor in catalysis. 332-334 (QRK) is a binding site for substrate. Position 424 (aspartate 424) interacts with Mg(2+).

It belongs to the gob-1 trehalose phosphatase family. Mg(2+) is required as a cofactor.

The catalysed reaction is alpha,alpha-trehalose 6-phosphate + H2O = alpha,alpha-trehalose + phosphate. With respect to regulation, inhibited by trehalose 6-sulfate. Its function is as follows. Catalyzes the hydrolysis of trehalose 6-phosphate to trehalose and phosphate; prevents the accumulation of toxic levels of trehalose 6-phosphate. The sequence is that of Trehalose-phosphatase from Brugia malayi (Filarial nematode worm).